A 251-amino-acid chain; its full sequence is MAAHLLIVDALNLIRRIHAVQGSPCVETCQHALDQLIIHSQPTHAVAVFDDDARSSGWRHQRLPDYKAGRPPMPDDLHNEMPALRAAFEQRGVRCWASDGNEADDLAATLALKVTEAGHQATIVSTDKGYCQLLSPGLRIRDYFQKRWLDAPFIEKEFGVLPRQLPDYWGLAGISSSKVPGVAGIGPKSATQLLIQFQNLEGIYAHLDEVPEKWRKKLEMHKEMAFLCRDIARLQTDLHIDGNLQQLRLAR.

Residue Asp104 participates in Mg(2+) binding. The 5'-3' exonuclease domain occupies 160 to 249; that stretch reads VLPRQLPDYW…IDGNLQQLRL (90 aa). The K(+) site is built by Leu171, Ala172, Pro180, Val182, and Ile185. The tract at residues 184–189 is interaction with DNA; the sequence is GIGPKS.

It belongs to the Xni family. It depends on Mg(2+) as a cofactor. K(+) is required as a cofactor.

Its function is as follows. Has flap endonuclease activity. During DNA replication, flap endonucleases cleave the 5'-overhanging flap structure that is generated by displacement synthesis when DNA polymerase encounters the 5'-end of a downstream Okazaki fragment. The chain is Flap endonuclease Xni from Salmonella schwarzengrund (strain CVM19633).